A 59-amino-acid polypeptide reads, in one-letter code: Bacteriocin curvacin-A (59 aa).

A propeptide spanning residues 1–18 is cleaved from the precursor; sequence MNNVKELSMTELQTITGG. C28 and C33 are oxidised to a cystine.

It belongs to the bacteriocin class IIA/YGNGV family.

The protein resides in the secreted. Its function is as follows. Bactericidal activity; inhibits closely related Lactobacilli, Listeria monocytogenes and ivanovvi, Enterococcus faecalis, Carnobacterium sp and Brocothrix thermosphacta. The protein is Bacteriocin curvacin-A (curA) of Latilactobacillus curvatus (Lactobacillus curvatus).